Consider the following 452-residue polypeptide: MITLKEALKLSNEEIKDLRAQLEARIIKERELGAYVEQLTGLPLSKLGEGVPIAIKDNIQIKGWSVTSGSKILQGYIAPYNATAIEKLLARNLAAFGRTNMDEFAMGSTTESSFYGHTLNPLNHAHVPGGSSGGSAAAVAGGIAIAALGSDTGGSIRQPAAFCGCVGFKPTYGRVSRYGLAAYSSSLDQIGPIAQNVEDAAILYDIIAGHDEKDSTSADVAFSSVADKINGERKLNICVIENYVNNASEDTKKALNSAIDKLKNFGHKIVYKNLEDSKYDVAAYYIIATAEASANLSRYDGVRYGRRAEAKNLKELYVNSRSEGFGEEVKRRILLGTFVLSSGYYDAYYIKAQKARAHIKAQYEKILDEADLIFMPVSPTTAPKFGLMSDPLQAYLSDIYTISVNLAGLPAISVPIAKDGQNLNISAQLIAKAWDEQTLIDGAKSLENLIKG.

Active-site charge relay system residues include K56 and S131. S155 functions as the Acyl-ester intermediate in the catalytic mechanism.

Belongs to the amidase family. GatA subfamily. As to quaternary structure, heterotrimer of A, B and C subunits.

It carries out the reaction L-glutamyl-tRNA(Gln) + L-glutamine + ATP + H2O = L-glutaminyl-tRNA(Gln) + L-glutamate + ADP + phosphate + H(+). In terms of biological role, allows the formation of correctly charged Gln-tRNA(Gln) through the transamidation of misacylated Glu-tRNA(Gln) in organisms which lack glutaminyl-tRNA synthetase. The reaction takes place in the presence of glutamine and ATP through an activated gamma-phospho-Glu-tRNA(Gln). The polypeptide is Glutamyl-tRNA(Gln) amidotransferase subunit A (Campylobacter curvus (strain 525.92)).